A 166-amino-acid chain; its full sequence is UBA-like domain-containing protein 2-A (166 aa).

A disordered region spans residues 120–166 (QQPVWLPPASPTTHLHHHHHHPQPVWPPNSQPTGGPQKAMAAMDGQR).

It belongs to the UBALD family.

This is UBA-like domain-containing protein 2-A (ubald2-a) from Xenopus laevis (African clawed frog).